The primary structure comprises 520 residues: Diacylglycerol O-acyltransferase 1 (520 aa).

Disordered stretches follow at residues 28-57 and 72-116; these read RRKS…GAPA and QGTA…AHRR. Residues 34 to 54 are compositionally biased toward low complexity; sequence DSSNGLLLSGSDNNSPSDDVG. Positions 81 to 98 are enriched in gly residues; the sequence is NNGGGDNNGGGRGGGEGR. Helical transmembrane passes span 126-146, 176-196, 207-227, 233-253, 276-296, 317-337, and 365-385; these read AIFK…LIAV, WPLF…FTVE, PVVI…PVYV, SAFL…LKLV, VSYY…TLCY, KLVI…NPIV, and VWLC…AELL. An FYXDWWN motif motif is present at residues 392–398; that stretch reads FYKDWWN. The next 3 membrane-spanning stretches (helical) occupy residues 434–454, 457–477, and 487–507; these read LAII…IAVP, LFKL…FITN, and VGNM…CVLL. His-447 is an active-site residue.

Belongs to the membrane-bound acyltransferase family. Sterol o-acyltransferase subfamily. In terms of assembly, interacts with LPCAT2 and LPAT2. In terms of tissue distribution, ubiquitous. Highest expression in young developing seeds.

The protein resides in the plastid. It localises to the chloroplast membrane. It is found in the endoplasmic reticulum membrane. The catalysed reaction is an acyl-CoA + a 1,2-diacyl-sn-glycerol = a triacyl-sn-glycerol + CoA. The enzyme catalyses 1,2-di-(9Z-octadecenoyl)-sn-glycerol + (9Z)-octadecenoyl-CoA = 1,2,3-tri-(9Z-octadecenoyl)-glycerol + CoA. It participates in glycerolipid metabolism; triacylglycerol biosynthesis. Its activity is regulated as follows. Partially inhibited by niacin. Major contributor to triacylglycerol (TAG) synthesis and oil accumulation in seeds. Catalyzes the acylation of the sn-3 hydroxy group of sn-1,2-diacylglycerol using acyl-CoA. Can use palmitoyl-CoA and oleoyl-CoA as substrates. Can use oleoyl-CoA and linoleoyl-CoA as substrates. Has substrate preference for oleoyl-CoA compared to linoleoyl-CoA. Has complementary functions with PDAT1 that are essential for triacylglycerol synthesis and normal development of both seeds and pollen. The chain is Diacylglycerol O-acyltransferase 1 from Arabidopsis thaliana (Mouse-ear cress).